Reading from the N-terminus, the 219-residue chain is Ribose-5-phosphate isomerase A (219 aa).

Substrate-binding positions include 28-31 (SGST), 81-84 (DGAD), and 94-97 (KGGG). The active-site Proton acceptor is E103. Residue K121 participates in substrate binding.

This sequence belongs to the ribose 5-phosphate isomerase family. As to quaternary structure, homodimer.

The enzyme catalyses aldehydo-D-ribose 5-phosphate = D-ribulose 5-phosphate. It participates in carbohydrate degradation; pentose phosphate pathway; D-ribose 5-phosphate from D-ribulose 5-phosphate (non-oxidative stage): step 1/1. Functionally, catalyzes the reversible conversion of ribose-5-phosphate to ribulose 5-phosphate. The sequence is that of Ribose-5-phosphate isomerase A from Mannheimia succiniciproducens (strain KCTC 0769BP / MBEL55E).